Consider the following 792-residue polypeptide: Serine/threonine-protein kinase Nek4 (792 aa).

A Protein kinase domain is found at 6–261 (YCYMRVVGRG…VRSILRQPYI (256 aa)). ATP contacts are provided by residues 12-20 (VGRGSYGEV) and K35. Residue D131 is the Proton acceptor of the active site. Phosphothreonine; by autocatalysis is present on T165. Disordered regions lie at residues 329 to 358 (QEKP…NTGE), 379 to 515 (ANAG…LPSY), 527 to 611 (QQND…SITQ), and 628 to 657 (LSED…TNEM). Residues S340 and S343 each carry the phosphoserine modification. Polar residues-rich tracts occupy residues 412 to 421 (QGNTKSSDQP), 456 to 467 (DQVTGIIENQDS), 473 to 484 (QPHSSMSEPSLS), 496 to 505 (AHSGTKSQFQ), and 541 to 551 (VNSSRTSSTAS). N6-methyllysine is present on K566. A compositionally biased stretch (polar residues) spans 602 to 611 (RFSSDCSITQ). The span at 641-657 (DKSDGDSREGKSHTNEM) shows a compositional bias: basic and acidic residues. A Phosphoserine modification is found at S675.

It belongs to the protein kinase superfamily. NEK Ser/Thr protein kinase family. NIMA subfamily. It depends on Mn(2+) as a cofactor. As to expression, expressed ubiquitously among various organs and is up-regulated in the testis.

Its subcellular location is the cytoplasm. The protein localises to the cell projection. It is found in the cilium. The enzyme catalyses L-seryl-[protein] + ATP = O-phospho-L-seryl-[protein] + ADP + H(+). It catalyses the reaction L-threonyl-[protein] + ATP = O-phospho-L-threonyl-[protein] + ADP + H(+). In terms of biological role, required for normal entry into proliferative arrest after a limited number of cell divisions, also called replicative senescence. Required for normal cell cycle arrest in response to double-stranded DNA damage. Protein kinase that seems to act exclusively upon threonine residues. The chain is Serine/threonine-protein kinase Nek4 (Nek4) from Mus musculus (Mouse).